Consider the following 70-residue polypeptide: Small ribosomal subunit protein eS17 (70 aa).

Belongs to the eukaryotic ribosomal protein eS17 family.

This is Small ribosomal subunit protein eS17 from Methanopyrus kandleri (strain AV19 / DSM 6324 / JCM 9639 / NBRC 100938).